A 438-amino-acid polypeptide reads, in one-letter code: Putative formin-like protein 21a (438 aa).

A disordered region spans residues 1–74; the sequence is MSPVEISGAD…RVLPRPPPPP (74 aa). Pro residues predominate over residues 22 to 61; that stretch reads PLPPPPPPPPPPMRRRAPLPPPPPPPMRRRAPLPPPPPPA. An FH2 domain is found at 124-438; it reads FPCPSKKKSS…SYGYFDQPWI (315 aa).

This sequence belongs to the formin-like family. Class-II subfamily.

The chain is Putative formin-like protein 21a (FH21A) from Arabidopsis thaliana (Mouse-ear cress).